We begin with the raw amino-acid sequence, 421 residues long: Medium-chain specific acyl-CoA dehydrogenase, mitochondrial (421 aa).

The N-terminal 25 residues, 1 to 25, are a transit peptide targeting the mitochondrion; the sequence is MAAGFGRCCRVLRSISRFHWRSQHT. Lys69 carries the post-translational modification N6-acetyllysine; alternate. Lys69 bears the N6-succinyllysine; alternate mark. Residue 158–167 participates in FAD binding; sequence YCVTEPGAGS. Ser167 lines the octanoyl-CoA pocket. Lys179 carries the post-translational modification N6-succinyllysine. 191–193 serves as a coordination point for FAD; that stretch reads WIT. Residues Lys212, Lys217, Lys259, and Lys271 each carry the N6-acetyllysine; alternate modification. N6-succinyllysine; alternate occurs at positions 212, 217, 259, and 271. An octanoyl-CoA-binding site is contributed by Asp278. N6-acetyllysine is present on Lys279. Position 281 (Arg281) interacts with octanoyl-CoA. Lys301 carries the N6-acetyllysine modification. FAD-binding positions include 306–308 and 316–317; these read RKT and HQ. Residue Thr351 is modified to Phosphothreonine. Residues 374 to 378 and 401 to 405 each bind FAD; these read QILGG and EGTSQ. Glu401 is a binding site for octanoyl-CoA. Glu401 functions as the Proton acceptor in the catalytic mechanism.

Belongs to the acyl-CoA dehydrogenase family. In terms of assembly, homotetramer. Interacts with the heterodimeric electron transfer flavoprotein ETF. FAD is required as a cofactor. Post-translationally, acetylated. Could occur at proximity of the cofactor-binding sites and reduce the catalytic activity. Could be deacetylated by SIRT3.

The protein resides in the mitochondrion matrix. The enzyme catalyses a medium-chain 2,3-saturated fatty acyl-CoA + oxidized [electron-transfer flavoprotein] + H(+) = a medium-chain (2E)-enoyl-CoA + reduced [electron-transfer flavoprotein]. It carries out the reaction pentanoyl-CoA + oxidized [electron-transfer flavoprotein] + H(+) = (2E)-pentenoyl-CoA + reduced [electron-transfer flavoprotein]. The catalysed reaction is hexanoyl-CoA + oxidized [electron-transfer flavoprotein] + H(+) = (2E)-hexenoyl-CoA + reduced [electron-transfer flavoprotein]. It catalyses the reaction octanoyl-CoA + oxidized [electron-transfer flavoprotein] + H(+) = (2E)-octenoyl-CoA + reduced [electron-transfer flavoprotein]. The enzyme catalyses decanoyl-CoA + oxidized [electron-transfer flavoprotein] + H(+) = (2E)-decenoyl-CoA + reduced [electron-transfer flavoprotein]. It carries out the reaction dodecanoyl-CoA + oxidized [electron-transfer flavoprotein] + H(+) = (2E)-dodecenoyl-CoA + reduced [electron-transfer flavoprotein]. The catalysed reaction is tetradecanoyl-CoA + oxidized [electron-transfer flavoprotein] + H(+) = (2E)-tetradecenoyl-CoA + reduced [electron-transfer flavoprotein]. It catalyses the reaction oxidized [electron-transfer flavoprotein] + hexadecanoyl-CoA + H(+) = (2E)-hexadecenoyl-CoA + reduced [electron-transfer flavoprotein]. The protein operates within lipid metabolism; mitochondrial fatty acid beta-oxidation. In terms of biological role, medium-chain specific acyl-CoA dehydrogenase is one of the acyl-CoA dehydrogenases that catalyze the first step of mitochondrial fatty acid beta-oxidation, an aerobic process breaking down fatty acids into acetyl-CoA and allowing the production of energy from fats. The first step of fatty acid beta-oxidation consists in the removal of one hydrogen from C-2 and C-3 of the straight-chain fatty acyl-CoA thioester, resulting in the formation of trans-2-enoyl-CoA. Electron transfer flavoprotein (ETF) is the electron acceptor that transfers electrons to the main mitochondrial respiratory chain via ETF-ubiquinone oxidoreductase (ETF dehydrogenase). Among the different mitochondrial acyl-CoA dehydrogenases, medium-chain specific acyl-CoA dehydrogenase acts specifically on acyl-CoAs with saturated 6 to 12 carbons long primary chains. This is Medium-chain specific acyl-CoA dehydrogenase, mitochondrial from Homo sapiens (Human).